A 51-amino-acid chain; its full sequence is Large ribosomal subunit protein bL33 (51 aa).

Belongs to the bacterial ribosomal protein bL33 family.

This is Large ribosomal subunit protein bL33 from Francisella philomiragia subsp. philomiragia (strain ATCC 25017 / CCUG 19701 / FSC 153 / O#319-036).